The following is a 295-amino-acid chain: Phosphatidylserine decarboxylase proenzyme (295 aa).

Catalysis depends on charge relay system; for autoendoproteolytic cleavage activity residues aspartate 90, histidine 147, and serine 254. Residue serine 254 is the Schiff-base intermediate with substrate; via pyruvic acid; for decarboxylase activity of the active site. Pyruvic acid (Ser); by autocatalysis is present on serine 254.

It belongs to the phosphatidylserine decarboxylase family. PSD-B subfamily. Prokaryotic type I sub-subfamily. In terms of assembly, heterodimer of a large membrane-associated beta subunit and a small pyruvoyl-containing alpha subunit. It depends on pyruvate as a cofactor. In terms of processing, is synthesized initially as an inactive proenzyme. Formation of the active enzyme involves a self-maturation process in which the active site pyruvoyl group is generated from an internal serine residue via an autocatalytic post-translational modification. Two non-identical subunits are generated from the proenzyme in this reaction, and the pyruvate is formed at the N-terminus of the alpha chain, which is derived from the carboxyl end of the proenzyme. The autoendoproteolytic cleavage occurs by a canonical serine protease mechanism, in which the side chain hydroxyl group of the serine supplies its oxygen atom to form the C-terminus of the beta chain, while the remainder of the serine residue undergoes an oxidative deamination to produce ammonia and the pyruvoyl prosthetic group on the alpha chain. During this reaction, the Ser that is part of the protease active site of the proenzyme becomes the pyruvoyl prosthetic group, which constitutes an essential element of the active site of the mature decarboxylase.

It is found in the cell membrane. The catalysed reaction is a 1,2-diacyl-sn-glycero-3-phospho-L-serine + H(+) = a 1,2-diacyl-sn-glycero-3-phosphoethanolamine + CO2. It functions in the pathway phospholipid metabolism; phosphatidylethanolamine biosynthesis; phosphatidylethanolamine from CDP-diacylglycerol: step 2/2. Catalyzes the formation of phosphatidylethanolamine (PtdEtn) from phosphatidylserine (PtdSer). In Sodalis glossinidius (strain morsitans), this protein is Phosphatidylserine decarboxylase proenzyme.